The following is a 374-amino-acid chain: Putative phosphoserine aminotransferase (374 aa).

Arg48 contributes to the L-glutamate binding site. Pyridoxal 5'-phosphate contacts are provided by residues 82-83 (AT), Phe106, Thr152, Asp174, and Gln197. An N6-(pyridoxal phosphate)lysine modification is found at Lys198. 249–250 (NT) contributes to the pyridoxal 5'-phosphate binding site.

Belongs to the class-V pyridoxal-phosphate-dependent aminotransferase family. SerC subfamily. In terms of assembly, homodimer. It depends on pyridoxal 5'-phosphate as a cofactor.

It localises to the cytoplasm. The catalysed reaction is O-phospho-L-serine + 2-oxoglutarate = 3-phosphooxypyruvate + L-glutamate. The enzyme catalyses 4-(phosphooxy)-L-threonine + 2-oxoglutarate = (R)-3-hydroxy-2-oxo-4-phosphooxybutanoate + L-glutamate. Its pathway is amino-acid biosynthesis; L-serine biosynthesis; L-serine from 3-phospho-D-glycerate: step 2/3. It participates in cofactor biosynthesis; pyridoxine 5'-phosphate biosynthesis; pyridoxine 5'-phosphate from D-erythrose 4-phosphate: step 3/5. Catalyzes the reversible conversion of 3-phosphohydroxypyruvate to phosphoserine and of 3-hydroxy-2-oxo-4-phosphonooxybutanoate to phosphohydroxythreonine. This chain is Putative phosphoserine aminotransferase, found in Mycobacterium avium (strain 104).